We begin with the raw amino-acid sequence, 200 residues long: Small ribosomal subunit protein uS4 (200 aa).

Residues 92 to 155 (SRLDNLVYRM…RNLTVVKEAL (64 aa)) enclose the S4 RNA-binding domain.

Belongs to the universal ribosomal protein uS4 family. In terms of assembly, part of the 30S ribosomal subunit. Contacts protein S5. The interaction surface between S4 and S5 is involved in control of translational fidelity.

Its function is as follows. One of the primary rRNA binding proteins, it binds directly to 16S rRNA where it nucleates assembly of the body of the 30S subunit. With S5 and S12 plays an important role in translational accuracy. The sequence is that of Small ribosomal subunit protein uS4 from Shouchella clausii (strain KSM-K16) (Alkalihalobacillus clausii).